The following is a 360-amino-acid chain: Peptide chain release factor 1 (360 aa).

N5-methylglutamine is present on Gln235. The tract at residues Lys285–Gln314 is disordered.

It belongs to the prokaryotic/mitochondrial release factor family. Methylated by PrmC. Methylation increases the termination efficiency of RF1.

The protein resides in the cytoplasm. Its function is as follows. Peptide chain release factor 1 directs the termination of translation in response to the peptide chain termination codons UAG and UAA. This Klebsiella pneumoniae subsp. pneumoniae (strain ATCC 700721 / MGH 78578) protein is Peptide chain release factor 1.